We begin with the raw amino-acid sequence, 405 residues long: Acetate kinase (405 aa).

Asn10 serves as a coordination point for Mg(2+). Lys17 is a binding site for ATP. Arg93 provides a ligand contact to substrate. Residue Asp150 is the Proton donor/acceptor of the active site. ATP contacts are provided by residues 210 to 214 (HLGNG), 284 to 286 (DMR), and 332 to 336 (GVGEN). Residue Glu386 coordinates Mg(2+).

This sequence belongs to the acetokinase family. As to quaternary structure, homodimer. Mg(2+) is required as a cofactor. Mn(2+) serves as cofactor.

It localises to the cytoplasm. The enzyme catalyses acetate + ATP = acetyl phosphate + ADP. The protein operates within metabolic intermediate biosynthesis; acetyl-CoA biosynthesis; acetyl-CoA from acetate: step 1/2. In terms of biological role, catalyzes the formation of acetyl phosphate from acetate and ATP. Can also catalyze the reverse reaction. This chain is Acetate kinase, found in Streptomyces avermitilis (strain ATCC 31267 / DSM 46492 / JCM 5070 / NBRC 14893 / NCIMB 12804 / NRRL 8165 / MA-4680).